A 589-amino-acid chain; its full sequence is Vomeromodulin (589 aa).

Residues 1 to 29 (MWVLQALAIMLSIQAGVLDLVEVPPVVRS) form the signal peptide. 2 disordered regions span residues 49–71 (GLNDPAKNRMLPPKRPGAPSRGG) and 146–170 (LLGKEGNEDPSKPSSGSKATGGLGQ). Asn-419 and Asn-437 each carry an N-linked (GlcNAc...) asparagine glycan.

Post-translationally, N-glycosylated. The N-glycans consist mainly of complex sialylated and fucosylated biantennary structures. In terms of tissue distribution, abundant in the lateral nasal glands. Also present in the posterior septal and vomeronasal glands.

It is found in the secreted. This is Vomeromodulin from Rattus norvegicus (Rat).